The chain runs to 564 residues: Mitochondrial distribution and morphology protein 34 (564 aa).

Positions 1–208 constitute an SMP-LTD domain; the sequence is MAFNFNWSPL…VPEYRDRESE (208 aa). Disordered regions lie at residues 208–240, 336–397, 404–423, 434–517, and 532–564; these read ESVN…NALN, SGGS…SAPT, QFSE…PQND, RISQ…DPRQ, and IQEE…AYGH. The segment covering 209 to 219 has biased composition (polar residues); sequence SVNTLDQSSGP. Over residues 351–365 the composition is skewed to basic residues; sequence SGRHPRPHGKKRKKR. The span at 366–376 shows a compositional bias: basic and acidic residues; that stretch reads VVDLRRPKTTD. A compositionally biased stretch (low complexity) spans 380 to 390; it reads SVSGESVFSSE. Composition is skewed to polar residues over residues 438-462 and 477-503; these read GEHT…SRNS and PRNS…SSAI.

Belongs to the MDM34 family. As to quaternary structure, component of the ER-mitochondria encounter structure (ERMES) or MDM complex, composed of mmm1, mdm10, mdm12 and mdm34.

Its subcellular location is the mitochondrion outer membrane. In terms of biological role, component of the ERMES/MDM complex, which serves as a molecular tether to connect the endoplasmic reticulum (ER) and mitochondria. Components of this complex are involved in the control of mitochondrial shape and protein biogenesis, and function in nonvesicular lipid trafficking between the ER and mitochondria. Mdm34 is required for the interaction of the ER-resident membrane protein mmm1 and the outer mitochondrial membrane-resident beta-barrel protein mdm10. The chain is Mitochondrial distribution and morphology protein 34 from Talaromyces stipitatus (strain ATCC 10500 / CBS 375.48 / QM 6759 / NRRL 1006) (Penicillium stipitatum).